Consider the following 314-residue polypeptide: tRNA dimethylallyltransferase (314 aa).

13–20 (GPTAIGKT) contacts ATP. 15–20 (TAIGKT) is a binding site for substrate. The interaction with substrate tRNA stretch occupies residues 38 to 41 (DSMQ).

This sequence belongs to the IPP transferase family. Monomer. Mg(2+) serves as cofactor.

The enzyme catalyses adenosine(37) in tRNA + dimethylallyl diphosphate = N(6)-dimethylallyladenosine(37) in tRNA + diphosphate. Catalyzes the transfer of a dimethylallyl group onto the adenine at position 37 in tRNAs that read codons beginning with uridine, leading to the formation of N6-(dimethylallyl)adenosine (i(6)A). The chain is tRNA dimethylallyltransferase from Desulfotalea psychrophila (strain LSv54 / DSM 12343).